Here is a 153-residue protein sequence, read N- to C-terminus: SsrA-binding protein (153 aa).

The span at 132–142 shows a compositional bias: basic and acidic residues; sequence ALKRKEAEREA. Positions 132-153 are disordered; sequence ALKRKEAEREAQSAMKRYAKGY.

Belongs to the SmpB family.

It localises to the cytoplasm. In terms of biological role, required for rescue of stalled ribosomes mediated by trans-translation. Binds to transfer-messenger RNA (tmRNA), required for stable association of tmRNA with ribosomes. tmRNA and SmpB together mimic tRNA shape, replacing the anticodon stem-loop with SmpB. tmRNA is encoded by the ssrA gene; the 2 termini fold to resemble tRNA(Ala) and it encodes a 'tag peptide', a short internal open reading frame. During trans-translation Ala-aminoacylated tmRNA acts like a tRNA, entering the A-site of stalled ribosomes, displacing the stalled mRNA. The ribosome then switches to translate the ORF on the tmRNA; the nascent peptide is terminated with the 'tag peptide' encoded by the tmRNA and targeted for degradation. The ribosome is freed to recommence translation, which seems to be the essential function of trans-translation. The chain is SsrA-binding protein from Campylobacter hominis (strain ATCC BAA-381 / DSM 21671 / CCUG 45161 / LMG 19568 / NCTC 13146 / CH001A).